Here is a 127-residue protein sequence, read N- to C-terminus: Cytochrome c2 (127 aa).

The N-terminal stretch at 1-20 (MRKLVFGLFVLAASVAPAAA) is a signal peptide. Glutamine 21 bears the Pyrrolidone carboxylic acid mark. The heme c site is built by cysteine 33, cysteine 36, histidine 37, and methionine 99.

It belongs to the cytochrome c family. Post-translationally, binds 1 heme c group covalently per subunit.

Its function is as follows. Cytochrome c2 is found mainly in purple, non-sulfur, photosynthetic bacteria where it functions as the electron donor to the oxidized bacteriochlorophyll in the photophosphorylation pathway. However, it may also have a role in the respiratory chain and is found in some non-photosynthetic bacteria. The protein is Cytochrome c2 (cycA) of Blastochloris viridis (Rhodopseudomonas viridis).